The primary structure comprises 298 residues: Sulfate adenylyltransferase subunit 2 (298 aa).

Basic and acidic residues-rich tracts occupy residues 272–282 (RTSERQGRLID) and 289–298 (MEKKKQEGYF). The disordered stretch occupies residues 272 to 298 (RTSERQGRLIDSDSAGSMEKKKQEGYF).

This sequence belongs to the PAPS reductase family. CysD subfamily. Heterodimer composed of CysD, the smaller subunit, and CysN.

It catalyses the reaction sulfate + ATP + H(+) = adenosine 5'-phosphosulfate + diphosphate. It functions in the pathway sulfur metabolism; hydrogen sulfide biosynthesis; sulfite from sulfate: step 1/3. In terms of biological role, with CysN forms the ATP sulfurylase (ATPS) that catalyzes the adenylation of sulfate producing adenosine 5'-phosphosulfate (APS) and diphosphate, the first enzymatic step in sulfur assimilation pathway. APS synthesis involves the formation of a high-energy phosphoric-sulfuric acid anhydride bond driven by GTP hydrolysis by CysN coupled to ATP hydrolysis by CysD. This Burkholderia lata (strain ATCC 17760 / DSM 23089 / LMG 22485 / NCIMB 9086 / R18194 / 383) protein is Sulfate adenylyltransferase subunit 2.